The primary structure comprises 675 residues: Collagen alpha-3(IX) chain (675 aa).

Positions Met1 to Ala21 are cleaved as a signal peptide. Disordered stretches follow at residues Gln22 to Ser517 and Lys542 to Thr660. Residues Gly25 to Glu515 form a triple-helical region 3 (COL3) region. Composition is skewed to pro residues over residues Gln27–Pro38 and Ser51–Lys60. A compositionally biased stretch (low complexity) spans Ala62 to Asp87. The span at Ala105–Ser125 shows a compositional bias: pro residues. Positions Gly126 to Gly135 are enriched in gly residues. Pro residues-rich tracts occupy residues Pro136–Pro155 and Leu173–Met184. Low complexity predominate over residues Pro218 to Pro233. A Cell attachment site motif is present at residues Arg242 to Asp244. A compositionally biased stretch (basic and acidic residues) spans Lys301 to Ala317. The segment covering Glu361–Arg374 has biased composition (low complexity). A glycan (N-linked (GlcNAc...) asparagine) is linked at Asn479. Over residues Thr481–Lys508 the composition is skewed to low complexity. Residues Ala516–Pro546 form a nonhelical region 3 (NC3) region. The interval Gly547 to Ser626 is triple-helical region 2 (COL2). Over residues His569–Thr582 the composition is skewed to low complexity. The short motif at Arg591–Asp593 is the Cell attachment site element. Positions Asp613–Gly624 are enriched in low complexity. A nonhelical region 2 (NC2) region spans residues Lys627 to Asp631. A triple-helical region 1 (COL1) region spans residues Gly632–Cys658. Residues Asp659–Ser675 are nonhelical region 1 (NC1).

This sequence belongs to the fibril-associated collagens with interrupted helices (FACIT) family. In terms of assembly, trimers composed of three different chains: alpha 1(IX), alpha 2(IX), and alpha 3(IX). In terms of processing, prolines at the third position of the tripeptide repeating unit (G-X-Y) are hydroxylated in some or all of the chains.

Its subcellular location is the secreted. It localises to the extracellular space. The protein resides in the extracellular matrix. Functionally, collagen type IX is a minor cartilage non-fibrillar collagen. It is associated with type II collagen fibrils. The sequence is that of Collagen alpha-3(IX) chain (COL9A3) from Gallus gallus (Chicken).